The sequence spans 550 residues: MAAKDVKFGNEARIKMLHGVNVLADAVKVTLGPKGRNVVLDKSFGPPSITKDGVSVAREIELEDKFENMGAQMVKEVASKANDAAGDGTTTATLLAQSIVNEGLKAVAAGMNPMDLKRGIDKAVIDAVDELKKLSVPCADSKAITQVGTISANADEKVGSLIAEAMEKVGNDGVITVEEGTGLQNELEVVKGMQFDRGYLSPYFINQPETGLVELENPYILMVDKKISNIRELLPILEAVAKSSKPLLIISEDLEGEALATLVVNSMRGIVKVAAVKAPGFGDRRKAMLQDISILTGGSVISEELAMDLEKSSLEDLGQAKRVVINKDTTTIIDGNGNKEAIKSRISQIRQEINEATSDYDKEKLNERLAKLSGGVAVLKVGAATEVEMKEKKARVEDALHATRAAVEEGVVPGGGVALVRVAEKISRINGQNEDQNVGIRVALRAMEAPLRQIVANSGEEPSVVTNNVKDGHGNYGYNAATDEYGDMISFGILDPTKVTRSALQYAASVAGLMITTECMVTDLPKDEKSSSELNSAPGNGMGGGMGGMM.

ATP contacts are provided by residues 30 to 33, Lys51, 87 to 91, Gly415, 479 to 481, and Asp495; these read TLGP, DGTTT, and NAA. A disordered region spans residues 525–550; sequence PKDEKSSSELNSAPGNGMGGGMGGMM. Residues 540 to 550 show a composition bias toward gly residues; it reads NGMGGGMGGMM.

The protein belongs to the chaperonin (HSP60) family. Forms a cylinder of 14 subunits composed of two heptameric rings stacked back-to-back. Interacts with the co-chaperonin GroES.

The protein resides in the cytoplasm. It carries out the reaction ATP + H2O + a folded polypeptide = ADP + phosphate + an unfolded polypeptide.. In terms of biological role, together with its co-chaperonin GroES, plays an essential role in assisting protein folding. The GroEL-GroES system forms a nano-cage that allows encapsulation of the non-native substrate proteins and provides a physical environment optimized to promote and accelerate protein folding. This chain is Chaperonin GroEL, found in Buchnera aphidicola subsp. Cinara cedri (strain Cc).